Here is a 189-residue protein sequence, read N- to C-terminus: Heme-binding protein 1 (189 aa).

Belongs to the HEBP family. As to quaternary structure, monomer.

It is found in the cytoplasm. Its function is as follows. May bind free porphyrinogens that may be present in the cell and thus facilitate removal of these potentially toxic compound. Binds with a high affinity to one molecule of heme or porphyrins. It binds metalloporphyrins, free porphyrins and N-methylprotoporphyrin with similar affinities. This is Heme-binding protein 1 (HEBP1) from Sus scrofa (Pig).